The primary structure comprises 353 residues: Quinolinate synthase (353 aa).

H47 and S68 together coordinate iminosuccinate. [4Fe-4S] cluster is bound at residue C113. Iminosuccinate is bound by residues 139–141 (YAN) and S156. Position 200 (C200) interacts with [4Fe-4S] cluster. Residues 226–228 (HPE) and T243 contribute to the iminosuccinate site. C297 is a [4Fe-4S] cluster binding site.

It belongs to the quinolinate synthase family. Type 1 subfamily. [4Fe-4S] cluster is required as a cofactor.

Its subcellular location is the cytoplasm. The catalysed reaction is iminosuccinate + dihydroxyacetone phosphate = quinolinate + phosphate + 2 H2O + H(+). It participates in cofactor biosynthesis; NAD(+) biosynthesis; quinolinate from iminoaspartate: step 1/1. In terms of biological role, catalyzes the condensation of iminoaspartate with dihydroxyacetone phosphate to form quinolinate. This Vibrio vulnificus (strain CMCP6) protein is Quinolinate synthase.